Consider the following 215-residue polypeptide: Probable phosphoglycerate mutase GpmB (215 aa).

Substrate-binding positions include 8 to 15 (RHGETQWN), 21 to 22 (QG), Arg58, Arg60, 82 to 85 (ELNM), 104 to 105 (RR), and 151 to 152 (GI). Residue His9 is the Tele-phosphohistidine intermediate of the active site. The Proton donor/acceptor role is filled by Glu82.

It belongs to the phosphoglycerate mutase family. GpmB subfamily.

It catalyses the reaction (2R)-2-phosphoglycerate = (2R)-3-phosphoglycerate. It functions in the pathway carbohydrate degradation; glycolysis; pyruvate from D-glyceraldehyde 3-phosphate: step 3/5. The sequence is that of Probable phosphoglycerate mutase GpmB from Shigella dysenteriae serotype 1 (strain Sd197).